Here is a 42-residue protein sequence, read N- to C-terminus: Photosystem I reaction center subunit IX (42 aa).

The chain crosses the membrane as a helical span at residues 7–27 (FLSTAPVLIMALLTFTAGLLI).

This sequence belongs to the PsaJ family.

The protein localises to the cellular thylakoid membrane. In terms of biological role, may help in the organization of the PsaE and PsaF subunits. The protein is Photosystem I reaction center subunit IX of Rippkaea orientalis (strain PCC 8801 / RF-1) (Cyanothece sp. (strain PCC 8801)).